We begin with the raw amino-acid sequence, 205 residues long: Macrophage immunometabolism regulator (205 aa).

The disordered stretch occupies residues 1–40; sequence MEVDINGVNRTNNSVPSTTEGSSPSKPDPEKPRCSSTPCS. Residues 8–25 are compositionally biased toward polar residues; the sequence is VNRTNNSVPSTTEGSSPS.

It belongs to the UNC119-binding protein family. In terms of assembly, interacts with unc119 family proteins; interaction preferentially takes place when unc119 proteins are unliganded with myristoylated proteins.

Its subcellular location is the cytoplasm. The protein resides in the cell projection. It localises to the cilium. In terms of biological role, may play a role in immune regulation through regulation of the macrophage function. May also play a role in trafficking of proteins via its interaction with unc119 family cargo adapters. May play a role in ciliary membrane localization. The sequence is that of Macrophage immunometabolism regulator (macir) from Xenopus tropicalis (Western clawed frog).